A 590-amino-acid chain; its full sequence is CTP synthase (590 aa).

Residues 1–281 are amidoligase domain; that stretch reads MPALRKHPQT…DAYVVRRLNL (281 aa). Position 23 (S23) interacts with CTP. S23 lines the UTP pocket. ATP is bound by residues 24–29 and D81; that span reads SLGKGL. Residues D81 and E155 each coordinate Mg(2+). Residues 162–164, 202–207, and K238 each bind CTP; these read DIE and KTKPTQ. Residues 202–207 and K238 contribute to the UTP site; that span reads KTKPTQ. The Glutamine amidotransferase type-1 domain occupies 306 to 554; that stretch reads RIALVGKYID…IGAAIDYKAA (249 aa). Position 369 (G369) interacts with L-glutamine. Catalysis depends on C396, which acts as the Nucleophile; for glutamine hydrolysis. L-glutamine-binding positions include 397–400, E419, and R480; that span reads LGLQ. Residues H527 and E529 contribute to the active site.

This sequence belongs to the CTP synthase family. Homotetramer.

The enzyme catalyses UTP + L-glutamine + ATP + H2O = CTP + L-glutamate + ADP + phosphate + 2 H(+). It carries out the reaction L-glutamine + H2O = L-glutamate + NH4(+). The catalysed reaction is UTP + NH4(+) + ATP = CTP + ADP + phosphate + 2 H(+). It participates in pyrimidine metabolism; CTP biosynthesis via de novo pathway; CTP from UDP: step 2/2. With respect to regulation, allosterically activated by GTP, when glutamine is the substrate; GTP has no effect on the reaction when ammonia is the substrate. The allosteric effector GTP functions by stabilizing the protein conformation that binds the tetrahedral intermediate(s) formed during glutamine hydrolysis. Inhibited by the product CTP, via allosteric rather than competitive inhibition. Functionally, catalyzes the ATP-dependent amination of UTP to CTP with either L-glutamine or ammonia as the source of nitrogen. Regulates intracellular CTP levels through interactions with the four ribonucleotide triphosphates. This Mycolicibacterium smegmatis (strain ATCC 700084 / mc(2)155) (Mycobacterium smegmatis) protein is CTP synthase.